A 1214-amino-acid chain; its full sequence is NBPF family member NBPF1 (1214 aa).

Residues 70–128 are a coiled coil; that stretch reads MLRNERQFKEEKLAEQLKQAEELRQYKVLVHSQERELTQLREKLREGRDASRSLNQHLQ. The tract at residues 162–200 is disordered; that stretch reads LSPENDEDEDEDVQVEEAEKVLESSAPREVQKAEESKVP. A compositionally biased stretch (acidic residues) spans 165–177; the sequence is ENDEDEDEDVQVE. The 95-residue stretch at 165–259 folds into the Olduvai 1 domain; it reads ENDEDEDEDV…ECQDAVNILP (95 aa). Residues 190-200 are compositionally biased toward basic and acidic residues; the sequence is EVQKAEESKVP. Residues 292–399 adopt a coiled-coil conformation; sequence NEKLHPQLAE…ASRSLNQHLQ (108 aa). Residues 433–471 form a disordered region; that stretch reads LSPENDEDEDEDVQVEEAEKVLESSAPREVQKAEESKVP. Over residues 436–448 the composition is skewed to acidic residues; sequence ENDEDEDEDVQVE. The 95-residue stretch at 436–530 folds into the Olduvai 2 domain; that stretch reads ENDEDEDEDV…ECQDAVNILP (95 aa). Positions 461–471 are enriched in basic and acidic residues; sequence EVQKAEESKVP. The stretch at 610–670 forms a coiled coil; the sequence is KSMLRNERQF…ASCSLNQHLQ (61 aa). Olduvai domains lie at 707 to 799, 800 to 888, 891 to 946, 947 to 1038, 1041 to 1114, and 1116 to 1214; these read ENDN…HIIP, ENES…ATGP, SREL…LDMD, EIEK…PPCP, SREL…RSTK, and RRRR…IFPQ. Disordered regions lie at residues 722 to 746 and 791 to 837; these read EKVQKSSAPREMPKAEEKEVPEDSL and WEDA…EGYS. 2 stretches are compositionally biased toward acidic residues: residues 801-810 and 821-833; these read NESDDEEEEE and ESEEEEVPQESWD. Residues 1102 to 1121 show a composition bias toward basic residues; sequence GKGKKRRGRRSTKKRRRRGR. Residues 1102–1136 are disordered; it reads GKGKKRRGRRSTKKRRRRGRKEGEEDQNPPCPRLS.

It belongs to the NBPF family. As to expression, widely expressed. The only tissue which shows a weak expression is kidney.

The protein resides in the cytoplasm. This is NBPF family member NBPF1 from Homo sapiens (Human).